Consider the following 773-residue polypeptide: Ethylene receptor 2 (773 aa).

A run of 4 helical transmembrane segments spans residues 4-24, 53-73, 82-102, and 122-142; these read EIAS…VLAI, VSDF…LYFV, WVLF…LLHG, and LTAL…PLLL. Residues Cys-94 and His-98 each coordinate Cu cation. The GAF domain occupies 187–331; sequence DRHTILYTTL…VVADQVTVAL (145 aa). The Histidine kinase domain occupies 374 to 614; it reads TMSEGMRRPM…PETMSLLLRF (241 aa). The 120-residue stretch at 647 to 766 folds into the Response regulatory domain; it reads QVLLVDTNDS…AMESELRRVL (120 aa). Asp-702 is subject to 4-aspartylphosphate. Residue Lys-751 forms a Glycyl lysine isopeptide (Lys-Gly) (interchain with G-Cter in ubiquitin) linkage.

It belongs to the ethylene receptor family. In terms of assembly, heteromer with ETR1. Binds to MRF3/ECIP1. Cu cation serves as cofactor. Post-translationally, autophosphorylated predominantly on Ser residues. Expressed in seedlings, roots, leaves, flowers, mature siliques, shoot apical meristems, leaf primordia, inflorescence meristems, young floral meristems, developing petals, carpels and ovules. Low expression in stamens.

Its subcellular location is the endoplasmic reticulum membrane. In terms of biological role, ethylene receptor related to bacterial two-component regulators. Acts as a redundant negative regulator of ethylene signaling. The chain is Ethylene receptor 2 from Arabidopsis thaliana (Mouse-ear cress).